The following is a 91-amino-acid chain: Uteroglobin (91 aa).

Positions 1-21 are cleaved as a signal peptide; it reads MKLAVTLTLVTLALCCSSASA.

The protein belongs to the secretoglobin family. As to quaternary structure, antiparallel homodimer; disulfide-linked. Interaction with LMBR1L has been observed in PubMed:16423471, but not in PubMed:23964685. In terms of tissue distribution, club cells (nonciliated cells of the surface epithelium of the pulmonary airways).

The protein localises to the secreted. Functionally, binds phosphatidylcholine, phosphatidylinositol, polychlorinated biphenyls (PCB) and weakly progesterone, potent inhibitor of phospholipase A2. This is Uteroglobin (SCGB1A1) from Homo sapiens (Human).